Consider the following 293-residue polypeptide: Cytidine deaminase 6 (293 aa).

CMP/dCMP-type deaminase domains lie at 16 to 147 (RGPS…FGPD) and 178 to 293 (EDCS…TNKN). A substrate-binding site is contributed by 57-59 (NVE). Histidine 70 lines the Zn(2+) pocket. Catalysis depends on glutamate 72, which acts as the Proton donor. Positions 103 and 106 each coordinate Zn(2+).

It belongs to the cytidine and deoxycytidylate deaminase family. As to quaternary structure, homodimer. Zn(2+) is required as a cofactor.

The catalysed reaction is cytidine + H2O + H(+) = uridine + NH4(+). It catalyses the reaction 2'-deoxycytidine + H2O + H(+) = 2'-deoxyuridine + NH4(+). Its function is as follows. This enzyme scavenges exogenous and endogenous cytidine and 2'-deoxycytidine for UMP synthesis. This Arabidopsis thaliana (Mouse-ear cress) protein is Cytidine deaminase 6 (CDA6).